The sequence spans 351 residues: Uroporphyrinogen decarboxylase (351 aa).

Substrate contacts are provided by residues 25-29, aspartate 74, tyrosine 151, serine 206, and histidine 325; that span reads RQAGR.

Belongs to the uroporphyrinogen decarboxylase family. In terms of assembly, homodimer.

It is found in the cytoplasm. It carries out the reaction uroporphyrinogen III + 4 H(+) = coproporphyrinogen III + 4 CO2. It functions in the pathway porphyrin-containing compound metabolism; protoporphyrin-IX biosynthesis; coproporphyrinogen-III from 5-aminolevulinate: step 4/4. Functionally, catalyzes the decarboxylation of four acetate groups of uroporphyrinogen-III to yield coproporphyrinogen-III. In Chlorobium chlorochromatii (strain CaD3), this protein is Uroporphyrinogen decarboxylase.